A 108-amino-acid polypeptide reads, in one-letter code: Biogenesis of lysosome-related organelles complex 1 subunit CNL1 (108 aa).

It belongs to the BLOC1S4 family. As to quaternary structure, component of the biogenesis of lysosome-related organelles complex-1 (BLOC-1).

It localises to the cytoplasm. Functionally, component of the biogenesis of lysosome-related organelles complex-1 (BLOC-1), a complex that is involved in endosomal cargo sorting. This chain is Biogenesis of lysosome-related organelles complex 1 subunit CNL1 (CLN1), found in Zygosaccharomyces rouxii (strain ATCC 2623 / CBS 732 / NBRC 1130 / NCYC 568 / NRRL Y-229).